We begin with the raw amino-acid sequence, 341 residues long: Putative UPF0607 protein FLJ37424 (341 aa).

Disordered regions lie at residues 72–131 and 216–283; these read PKTE…NPRP and GLLM…LPCL. Basic and acidic residues predominate over residues 79–101; the sequence is EEPKEATEVKDQVETQGQEDNKR. Positions 108–127 are enriched in polar residues; it reads EAASTSRPLETQGNLTSSWY. Residues 243-252 show a composition bias toward basic residues; sequence AGHRSHKRKL.

This sequence belongs to the UPF0607 family.

In Homo sapiens (Human), this protein is Putative UPF0607 protein FLJ37424.